Here is a 1375-residue protein sequence, read N- to C-terminus: Probable GMP synthase [glutamine-hydrolyzing] (1375 aa).

Residues 7–119 (QILVLDFGSQ…VLEIMESSQD (113 aa)) enclose the Glutamine amidotransferase type-1; first part domain. Cysteine 84 functions as the Nucleophile in the catalytic mechanism. The tract at residues 120-500 (SKDSSCFAFQ…NNATQGFKSC (381 aa)) is insert-1. N-acetyltransferase domains are found at residues 141 to 300 (LSFD…KALE) and 318 to 484 (VFLR…LEKK). Positions 501-580 (SLFKGIKQDS…AVGICGANTC (80 aa)) constitute a Glutamine amidotransferase type-1; second part domain. Catalysis depends on residues histidine 554 and glutamate 556. The insert-2 stretch occupies residues 597–1071 (IVYGGKAHCE…SGVANSLKIT (475 aa)). The 154-residue stretch at 612-765 (MQIQEAFKHI…ELIPLSIARE (154 aa)) folds into the N-acetyltransferase 3 domain. Residues 1011 to 1036 (RIVDSQHTESSDIKGQSHLESSADSG) are disordered. The span at 1014-1027 (DSQHTESSDIKGQS) shows a compositional bias: basic and acidic residues. In terms of domain architecture, GMPS ATP-PPase spans 1055–1250 (YLEGNDRSGV…LGMPESMLMR (196 aa)). Position 1083 to 1089 (1083 to 1089 (SGGVDSS)) interacts with ATP.

In terms of assembly, homodimer.

It carries out the reaction XMP + L-glutamine + ATP + H2O = GMP + L-glutamate + AMP + diphosphate + 2 H(+). The protein operates within purine metabolism; GMP biosynthesis; GMP from XMP (L-Gln route): step 1/1. In terms of biological role, catalyzes the synthesis of GMP from XMP. In Helicobacter hepaticus (strain ATCC 51449 / 3B1), this protein is Probable GMP synthase [glutamine-hydrolyzing] (guaA).